Reading from the N-terminus, the 507-residue chain is Histidine ammonia-lyase (507 aa).

Positions 141–143 form a cross-link, 5-imidazolinone (Ala-Gly); the sequence is ASG. Residue S142 is modified to 2,3-didehydroalanine (Ser).

The protein belongs to the PAL/histidase family. In terms of processing, contains an active site 4-methylidene-imidazol-5-one (MIO), which is formed autocatalytically by cyclization and dehydration of residues Ala-Ser-Gly.

The protein resides in the cytoplasm. The enzyme catalyses L-histidine = trans-urocanate + NH4(+). It functions in the pathway amino-acid degradation; L-histidine degradation into L-glutamate; N-formimidoyl-L-glutamate from L-histidine: step 1/3. This is Histidine ammonia-lyase from Paraburkholderia phytofirmans (strain DSM 17436 / LMG 22146 / PsJN) (Burkholderia phytofirmans).